The primary structure comprises 336 residues: Lipoyl synthase (336 aa).

Cys81, Cys86, Cys92, Cys107, Cys111, Cys114, and Ser323 together coordinate [4Fe-4S] cluster. Positions 93–312 constitute a Radical SAM core domain; it reads FGHGTATFMI…EDYGYELGFS (220 aa).

Belongs to the radical SAM superfamily. Lipoyl synthase family. [4Fe-4S] cluster serves as cofactor.

The protein resides in the cytoplasm. The catalysed reaction is [[Fe-S] cluster scaffold protein carrying a second [4Fe-4S](2+) cluster] + N(6)-octanoyl-L-lysyl-[protein] + 2 oxidized [2Fe-2S]-[ferredoxin] + 2 S-adenosyl-L-methionine + 4 H(+) = [[Fe-S] cluster scaffold protein] + N(6)-[(R)-dihydrolipoyl]-L-lysyl-[protein] + 4 Fe(3+) + 2 hydrogen sulfide + 2 5'-deoxyadenosine + 2 L-methionine + 2 reduced [2Fe-2S]-[ferredoxin]. It functions in the pathway protein modification; protein lipoylation via endogenous pathway; protein N(6)-(lipoyl)lysine from octanoyl-[acyl-carrier-protein]: step 2/2. Its function is as follows. Catalyzes the radical-mediated insertion of two sulfur atoms into the C-6 and C-8 positions of the octanoyl moiety bound to the lipoyl domains of lipoate-dependent enzymes, thereby converting the octanoylated domains into lipoylated derivatives. In Stenotrophomonas maltophilia (strain R551-3), this protein is Lipoyl synthase.